The chain runs to 66 residues: uncharacterized protein (66 aa).

This is an uncharacterized protein from Escherichia coli O157:H7.